The chain runs to 237 residues: uncharacterized protein (237 aa).

One can recognise an N-acetyltransferase domain in the interval 119–237; it reads VTVRRLTPTD…PAGLDGGLPA (119 aa).

This is an uncharacterized protein from Streptomyces virginiae (Streptomyces cinnamonensis).